The following is a 210-amino-acid chain: Thymidylate kinase (210 aa).

10–17 (GPEGAGKS) contacts ATP.

The protein belongs to the thymidylate kinase family.

The catalysed reaction is dTMP + ATP = dTDP + ADP. Functionally, phosphorylation of dTMP to form dTDP in both de novo and salvage pathways of dTTP synthesis. The sequence is that of Thymidylate kinase from Pseudomonas fluorescens (strain ATCC BAA-477 / NRRL B-23932 / Pf-5).